The sequence spans 395 residues: MAKETYVRTKPHVNIGTIGHVDHGKTTLTAAISKVLAEKQGVDATDFAEIDNAPEEKERGITINTSHIEYETEKRHYAHIDAPGHADYVKNMITGAAQMDGAILVVAATDGPMPQTREHILLARQVGVDYLVVFLNKTDLVDDEELVELVEMEVRELLSEYDFPGDDIPVLKGSALKALEGDPEQVKVIEELMDTVDSYIPEPARETDKPFLMPVEDVFTITGRGTVASGRVDRGVLTTGTEIEIVGLKDEVQKTTVTGIEMFRKTLEEAQAGDNIGALLRGVDRSNIERGQVLAKPGSIKTHKKFKAEVYVLTKEEGGRHTPFFTNYRPQFYFHTTDVTGVVELPAGVEMVMPGDQVTFEIELISPVAIEQGLKFTVREGGHTVGAGTVTDIED.

In terms of domain architecture, tr-type G spans 10–204 (KPHVNIGTIG…TVDSYIPEPA (195 aa)). Residues 19-26 (GHVDHGKT) are G1. Residue 19-26 (GHVDHGKT) coordinates GTP. Thr-26 contacts Mg(2+). The G2 stretch occupies residues 60 to 64 (GITIN). The tract at residues 81–84 (DAPG) is G3. Residues 81 to 85 (DAPGH) and 136 to 139 (NKTD) each bind GTP. The segment at 136-139 (NKTD) is G4. The interval 174–176 (SAL) is G5.

The protein belongs to the TRAFAC class translation factor GTPase superfamily. Classic translation factor GTPase family. EF-Tu/EF-1A subfamily. Monomer.

The protein resides in the cytoplasm. It catalyses the reaction GTP + H2O = GDP + phosphate + H(+). Functionally, GTP hydrolase that promotes the GTP-dependent binding of aminoacyl-tRNA to the A-site of ribosomes during protein biosynthesis. The sequence is that of Elongation factor Tu from Leuconostoc mesenteroides subsp. mesenteroides (strain ATCC 8293 / DSM 20343 / BCRC 11652 / CCM 1803 / JCM 6124 / NCDO 523 / NBRC 100496 / NCIMB 8023 / NCTC 12954 / NRRL B-1118 / 37Y).